Consider the following 331-residue polypeptide: Adenosine deaminase (331 aa).

Zn(2+)-binding residues include His-12 and His-14. 3 residues coordinate substrate: His-14, Asp-16, and Gly-170. His-197 contacts Zn(2+). Glu-200 acts as the Proton donor in catalysis. Asp-278 contacts Zn(2+). Asp-279 serves as a coordination point for substrate.

This sequence belongs to the metallo-dependent hydrolases superfamily. Adenosine and AMP deaminases family. Adenosine deaminase subfamily. It depends on Zn(2+) as a cofactor.

It carries out the reaction adenosine + H2O + H(+) = inosine + NH4(+). It catalyses the reaction 2'-deoxyadenosine + H2O + H(+) = 2'-deoxyinosine + NH4(+). Functionally, catalyzes the hydrolytic deamination of adenosine and 2-deoxyadenosine. The chain is Adenosine deaminase from Shewanella loihica (strain ATCC BAA-1088 / PV-4).